The following is a 624-amino-acid chain: MIYKAGSYEVIVIGAGHAGCEAALASARMGCQTLLVTMSIDHIALMPCNPSIGGPAKAQVVREIDALGGEMALNIDKANVQIRTINTGKGPAVQALRAQADKRQYHLEMLKTLFNQKKLDILMAEVEDIELSAGRVKAIVTRTGARFECQALVLTTGTYLKGRIIVGDISFDGGPGNQFPAARLSESLKRMGLRLGRFKTGTPPRIDSKSVDFSKMIEQPGDKRPLRFSFISPLINRPQLPCWLTHSNKKTHQIVMNNLDRAPMYTGIIKGIGTRYCPSFEDKVVRFSHKDSHQLFIEPEGRDTDEMYVQGLNTSLPEDVQIEVLKSIPGLENVRIMRTGYAIEYDIIYPSQLKLSLECKTVEGLFTAGQINGTSGYEEAAAQGLIAGINAALQVKEKEPFILKRSEAYIAVMIDDLINKEIVEPYRLLTSRAEYRLLLRQDNADLRLTEKGRQIGLVDDNRWMAYQQKEEILEVESNELKFSSFTPADEEMADFLSGKNTAAIRDRVSLWELLRRPELSIYDYVEKGWLRDNDPDILEQLEIQAKYEGYIEKQKEQVKRFEKLENKMIPPDINYDEVYGLSQEAVQKLKIILPASVGQASRIAGVNPADINVLLIFLEKKRRK.

14-19 (GAGHAG) lines the FAD pocket. 273-287 (GTRYCPSFEDKVVRF) serves as a coordination point for NAD(+).

It belongs to the MnmG family. Homodimer. Heterotetramer of two MnmE and two MnmG subunits. FAD serves as cofactor.

Its subcellular location is the cytoplasm. Its function is as follows. NAD-binding protein involved in the addition of a carboxymethylaminomethyl (cmnm) group at the wobble position (U34) of certain tRNAs, forming tRNA-cmnm(5)s(2)U34. This chain is tRNA uridine 5-carboxymethylaminomethyl modification enzyme MnmG, found in Syntrophomonas wolfei subsp. wolfei (strain DSM 2245B / Goettingen).